The following is a 442-amino-acid chain: Cell adhesion molecule 1 (442 aa).

Residues M1–G44 form the signal peptide. The Ig-like V-type domain maps to Q45–T139. The Extracellular portion of the chain corresponds to Q45–H374. Cysteines 64 and 124 form a disulfide. N67, N101, N113, and N165 each carry an N-linked (GlcNAc...) asparagine glycan. 2 consecutive Ig-like C2-type domains span residues P144 to E238 and P243 to Y329. Intrachain disulfides connect C166–C220 and C267–C313. N-linked (GlcNAc...) asparagine glycosylation is found at N304 and N308. A helical transmembrane segment spans residues A375–L395. At G396 to I442 the chain is on the cytoplasmic side. Phosphothreonine is present on T422. S434 is subject to Phosphoserine.

Belongs to the nectin family. As to quaternary structure, homodimer (via Ig-like V-type domain). Interacts with FARP1. Interacts (via Ig-like V-type domain) with CRTAM (via Ig-like V-type domain); the interaction competes with CRTAM homodimerization and CADM1 homodimerization. Interacts (via C-terminus) with EPB41L3/DAL1. The interaction with EPB41L3/DAL1 may act to anchor CADM1 to the actin cytoskeleton. Interacts (via C-terminus) with MPP2 (via PDZ domain). Interacts (via C-terminus) with MPP3 (via PDZ domain); this interaction connects CADM1 with DLG1. Interacts (via C-terminus) with PALS2 (via PDZ domain). In terms of assembly, (Microbial infection) Interacts with herpes virus 8 proteins vFLIP and vGPCR; these interactions are essential for NF-kappa-B activation. Post-translationally, glycosylation at Asn-67 and Asn-101 promotes adhesive binding and synapse induction.

Its subcellular location is the cell membrane. The protein localises to the synapse. Its function is as follows. Mediates homophilic cell-cell adhesion in a Ca(2+)-independent manner. Also mediates heterophilic cell-cell adhesion with CADM3 and NECTIN3 in a Ca(2+)-independent manner. Interaction with CRTAM promotes natural killer (NK) cell cytotoxicity and interferon-gamma (IFN-gamma) secretion by CD8+ cells in vitro as well as NK cell-mediated rejection of tumors expressing CADM1 in vivo. In mast cells, may mediate attachment to and promote communication with nerves. CADM1, together with MITF, is essential for development and survival of mast cells in vivo. By interacting with CRTAM and thus promoting the adhesion between CD8+ T-cells and CD8+ dendritic cells, regulates the retention of activated CD8+ T-cell within the draining lymph node. Required for the intestinal retention of intraepithelial CD4+ CD8+ T-cells and, to a lesser extent, intraepithelial and lamina propria CD8+ T-cells and CD4+ T-cells. Interaction with CRTAM promotes the adhesion to gut-associated CD103+ dendritic cells, which may facilitate the expression of gut-homing and adhesion molecules on T-cells and the conversion of CD4+ T-cells into CD4+ CD8+ T-cells. Acts as a synaptic cell adhesion molecule and plays a role in the formation of dendritic spines and in synapse assembly. May be involved in neuronal migration, axon growth, pathfinding, and fasciculation on the axons of differentiating neurons. May play diverse roles in the spermatogenesis including in the adhesion of spermatocytes and spermatids to Sertoli cells and for their normal differentiation into mature spermatozoa. Acts as a tumor suppressor in non-small-cell lung cancer (NSCLC) cells. May contribute to the less invasive phenotypes of lepidic growth tumor cells. In terms of biological role, (Microbial infection) Induces cell fusion in neuron infected by a neuropathogenic strain of measles. Interacts with measles hemagglutinin to trigger hyperfusogenic F-mediated membrane fusion and presumably transsynaptic cell-to-cell transmission of the virus. The polypeptide is Cell adhesion molecule 1 (Homo sapiens (Human)).